The sequence spans 355 residues: tRNA N6-adenosine threonylcarbamoyltransferase (355 aa).

The Fe cation site is built by His-113 and His-117. Residues 135–139 (LASGG), Asp-168, Gly-181, and Asn-279 contribute to the substrate site. Fe cation is bound at residue Asp-307.

The protein belongs to the KAE1 / TsaD family. The cofactor is Fe(2+).

The protein resides in the cytoplasm. The catalysed reaction is L-threonylcarbamoyladenylate + adenosine(37) in tRNA = N(6)-L-threonylcarbamoyladenosine(37) in tRNA + AMP + H(+). In terms of biological role, required for the formation of a threonylcarbamoyl group on adenosine at position 37 (t(6)A37) in tRNAs that read codons beginning with adenine. Is involved in the transfer of the threonylcarbamoyl moiety of threonylcarbamoyl-AMP (TC-AMP) to the N6 group of A37, together with TsaE and TsaB. TsaD likely plays a direct catalytic role in this reaction. The chain is tRNA N6-adenosine threonylcarbamoyltransferase from Bradyrhizobium sp. (strain BTAi1 / ATCC BAA-1182).